A 419-amino-acid polypeptide reads, in one-letter code: Methylthioribose kinase (419 aa).

ATP is bound by residues Asn49 and Lys64. Asp239 serves as a coordination point for substrate. An ATP-binding site is contributed by 256-258; that stretch reads DPE. Substrate is bound at residue Arg365.

The protein belongs to the methylthioribose kinase family. Homodimer.

It catalyses the reaction 5-(methylsulfanyl)-D-ribose + ATP = 5-(methylsulfanyl)-alpha-D-ribose 1-phosphate + ADP + H(+). It carries out the reaction 5-deoxy-D-ribose + ATP = 5-deoxy-alpha-D-ribose 1-phosphate + ADP + H(+). The protein operates within amino-acid biosynthesis; L-methionine biosynthesis via salvage pathway; S-methyl-5-thio-alpha-D-ribose 1-phosphate from S-methyl-5'-thioadenosine (hydrolase route): step 2/2. In terms of biological role, catalyzes the phosphorylation of methylthioribose into methylthioribose-1-phosphate. Also catalyzes the phosphorylation of 5-deoxyribose to 5-deoxyribose-1-phosphate. Part of a bifunctional DHAP-shunt salvage pathway for SAM by-products. The sequence is that of Methylthioribose kinase from Escherichia coli O45:K1 (strain S88 / ExPEC).